Here is a 454-residue protein sequence, read N- to C-terminus: Bifunctional protein GlmU (454 aa).

A pyrophosphorylase region spans residues 1-229; that stretch reads MQRYAVVLAA…FDEIMGVNDR (229 aa). UDP-N-acetyl-alpha-D-glucosamine is bound by residues 8–11, Lys22, Gln72, and 77–78; these read LAAG and GT. Asp102 is a binding site for Mg(2+). UDP-N-acetyl-alpha-D-glucosamine contacts are provided by Gly139, Glu154, and Asn227. Asn227 contributes to the Mg(2+) binding site. A linker region spans residues 230–250; that stretch reads VALSKAEQAMRQRINEYHMRN. Residues 251-454 are N-acetyltransferase; it reads GVTLIDPSST…KPGYLNKNKE (204 aa). UDP-N-acetyl-alpha-D-glucosamine is bound by residues Arg332 and Lys350. The active-site Proton acceptor is His362. Residues Tyr365 and Asn376 each coordinate UDP-N-acetyl-alpha-D-glucosamine. Acetyl-CoA-binding positions include 385–386, Ala422, and Arg439; that span reads NY.

The protein in the N-terminal section; belongs to the N-acetylglucosamine-1-phosphate uridyltransferase family. It in the C-terminal section; belongs to the transferase hexapeptide repeat family. In terms of assembly, homotrimer. Mg(2+) is required as a cofactor.

It is found in the cytoplasm. The enzyme catalyses alpha-D-glucosamine 1-phosphate + acetyl-CoA = N-acetyl-alpha-D-glucosamine 1-phosphate + CoA + H(+). It catalyses the reaction N-acetyl-alpha-D-glucosamine 1-phosphate + UTP + H(+) = UDP-N-acetyl-alpha-D-glucosamine + diphosphate. The protein operates within nucleotide-sugar biosynthesis; UDP-N-acetyl-alpha-D-glucosamine biosynthesis; N-acetyl-alpha-D-glucosamine 1-phosphate from alpha-D-glucosamine 6-phosphate (route II): step 2/2. It functions in the pathway nucleotide-sugar biosynthesis; UDP-N-acetyl-alpha-D-glucosamine biosynthesis; UDP-N-acetyl-alpha-D-glucosamine from N-acetyl-alpha-D-glucosamine 1-phosphate: step 1/1. Its pathway is bacterial outer membrane biogenesis; LPS lipid A biosynthesis. Functionally, catalyzes the last two sequential reactions in the de novo biosynthetic pathway for UDP-N-acetylglucosamine (UDP-GlcNAc). The C-terminal domain catalyzes the transfer of acetyl group from acetyl coenzyme A to glucosamine-1-phosphate (GlcN-1-P) to produce N-acetylglucosamine-1-phosphate (GlcNAc-1-P), which is converted into UDP-GlcNAc by the transfer of uridine 5-monophosphate (from uridine 5-triphosphate), a reaction catalyzed by the N-terminal domain. This is Bifunctional protein GlmU from Staphylococcus carnosus (strain TM300).